Here is a 376-residue protein sequence, read N- to C-terminus: Erythronate-4-phosphate dehydrogenase (376 aa).

Residues Ser-45 and Thr-67 each coordinate substrate. Position 147 (Asp-147) interacts with NAD(+). Arg-209 is an active-site residue. An NAD(+)-binding site is contributed by Asp-233. Glu-238 is a catalytic residue. Catalysis depends on His-255, which acts as the Proton donor. Position 258 (Gly-258) interacts with NAD(+). Tyr-259 contacts substrate.

Belongs to the D-isomer specific 2-hydroxyacid dehydrogenase family. PdxB subfamily. In terms of assembly, homodimer.

The protein localises to the cytoplasm. The enzyme catalyses 4-phospho-D-erythronate + NAD(+) = (R)-3-hydroxy-2-oxo-4-phosphooxybutanoate + NADH + H(+). It functions in the pathway cofactor biosynthesis; pyridoxine 5'-phosphate biosynthesis; pyridoxine 5'-phosphate from D-erythrose 4-phosphate: step 2/5. Catalyzes the oxidation of erythronate-4-phosphate to 3-hydroxy-2-oxo-4-phosphonooxybutanoate. This chain is Erythronate-4-phosphate dehydrogenase, found in Shewanella halifaxensis (strain HAW-EB4).